The chain runs to 145 residues: D-aminoacyl-tRNA deacylase (145 aa).

The Gly-cisPro motif, important for rejection of L-amino acids motif lies at 137–138 (GP).

Belongs to the DTD family. As to quaternary structure, homodimer.

The protein localises to the cytoplasm. The catalysed reaction is glycyl-tRNA(Ala) + H2O = tRNA(Ala) + glycine + H(+). It catalyses the reaction a D-aminoacyl-tRNA + H2O = a tRNA + a D-alpha-amino acid + H(+). In terms of biological role, an aminoacyl-tRNA editing enzyme that deacylates mischarged D-aminoacyl-tRNAs. Also deacylates mischarged glycyl-tRNA(Ala), protecting cells against glycine mischarging by AlaRS. Acts via tRNA-based rather than protein-based catalysis; rejects L-amino acids rather than detecting D-amino acids in the active site. By recycling D-aminoacyl-tRNA to D-amino acids and free tRNA molecules, this enzyme counteracts the toxicity associated with the formation of D-aminoacyl-tRNA entities in vivo and helps enforce protein L-homochirality. In Shewanella woodyi (strain ATCC 51908 / MS32), this protein is D-aminoacyl-tRNA deacylase.